Here is a 115-residue protein sequence, read N- to C-terminus: Procyclic form-specific polypeptide (115 aa).

The N-terminal stretch at 1-27 (MAPRSLYLLAVLLFSANLFAGVGFAAA) is a signal peptide. A disordered region spans residues 27 to 97 (AAEGPEDKGL…PEPEPGAATL (71 aa)). Residues 31–52 (PEDKGLTKGGKGKGEKGTKVGA) are compositionally biased toward basic and acidic residues. Residue Asn56 is glycosylated (N-linked (GlcNAc...) asparagine). 17 tandem repeats follow at residues 59-60 (DP), 61-62 (DP), 63-64 (EP), 65-66 (EP), 67-68 (EP), 69-70 (EP), 71-72 (EP), 73-74 (EP), 75-76 (EP), 77-78 (EP), 79-80 (EP), 81-82 (EP), 83-84 (EP), 85-86 (EP), 87-88 (EP), 89-90 (EP), and 91-92 (EP). Residues 59–92 (DPDPEPEPEPEPEPEPEPEPEPEPEPEPEPEPEP) form a 17 X 2 AA tandem repeats of [DE]-P region. Positions 60-90 (PDPEPEPEPEPEPEPEPEPEPEPEPEPEPEP) are enriched in acidic residues. Gly93 carries GPI-anchor amidated glycine lipidation. Residues 94 to 115 (AATLKSVALPFAIAAAALVAAF) constitute a propeptide, removed in mature form.

The protein localises to the cell membrane. Major surface antigen of procyclic forms. The polypeptide is Procyclic form-specific polypeptide (PROA) (Trypanosoma brucei brucei).